A 158-amino-acid chain; its full sequence is MENQKQYPMTQEGFEKLERELEELKTVKRPEVVEKIKVARSFGDLSENSEYDAAKDEQGFIEQDIQRIEHMLRNALIIEDTGDNNVVKIGKTVTFVELPGDEEESYQIVGSAESDAFNGKISNESPMAKALIGKGLDDEVRVPLPNGGEMNVKIVNIQ.

The stretch at 4–70 (QKQYPMTQEG…IEQDIQRIEH (67 aa)) forms a coiled coil.

Belongs to the GreA/GreB family.

Functionally, necessary for efficient RNA polymerase transcription elongation past template-encoded arresting sites. The arresting sites in DNA have the property of trapping a certain fraction of elongating RNA polymerases that pass through, resulting in locked ternary complexes. Cleavage of the nascent transcript by cleavage factors such as GreA or GreB allows the resumption of elongation from the new 3'terminus. GreA releases sequences of 2 to 3 nucleotides. The polypeptide is Transcription elongation factor GreA (Staphylococcus aureus (strain Mu3 / ATCC 700698)).